Here is a 286-residue protein sequence, read N- to C-terminus: ATP synthase gamma chain (286 aa).

Belongs to the ATPase gamma chain family. In terms of assembly, F-type ATPases have 2 components, CF(1) - the catalytic core - and CF(0) - the membrane proton channel. CF(1) has five subunits: alpha(3), beta(3), gamma(1), delta(1), epsilon(1). CF(0) has three main subunits: a, b and c.

It localises to the cell membrane. Functionally, produces ATP from ADP in the presence of a proton gradient across the membrane. The gamma chain is believed to be important in regulating ATPase activity and the flow of protons through the CF(0) complex. This Ureaplasma parvum serovar 3 (strain ATCC 27815 / 27 / NCTC 11736) protein is ATP synthase gamma chain.